The sequence spans 308 residues: ADP-L-glycero-D-manno-heptose-6-epimerase (308 aa).

NADP(+) contacts are provided by residues 10-11 (FI), 31-32 (DN), Lys38, Lys53, 75-79 (EGACS), and Asn92. Tyr139 (proton acceptor) is an active-site residue. Position 143 (Lys143) interacts with NADP(+). A substrate-binding site is contributed by Asn168. Val169 and Lys177 together coordinate NADP(+). The active-site Proton acceptor is Lys177. Residues Ser179, His186, 200–203 (FAGS), Arg208, and Tyr271 each bind substrate.

It belongs to the NAD(P)-dependent epimerase/dehydratase family. HldD subfamily. Homopentamer. Requires NADP(+) as cofactor.

It carries out the reaction ADP-D-glycero-beta-D-manno-heptose = ADP-L-glycero-beta-D-manno-heptose. The protein operates within nucleotide-sugar biosynthesis; ADP-L-glycero-beta-D-manno-heptose biosynthesis; ADP-L-glycero-beta-D-manno-heptose from D-glycero-beta-D-manno-heptose 7-phosphate: step 4/4. In terms of biological role, catalyzes the interconversion between ADP-D-glycero-beta-D-manno-heptose and ADP-L-glycero-beta-D-manno-heptose via an epimerization at carbon 6 of the heptose. In Haemophilus influenzae (strain 86-028NP), this protein is ADP-L-glycero-D-manno-heptose-6-epimerase.